The primary structure comprises 383 residues: Acetylornithine deacetylase (383 aa).

His80 is a binding site for Zn(2+). The active site involves Asp82. Asp112 lines the Zn(2+) pocket. Glu144 is an active-site residue. Residues Glu145, Glu169, and His355 each contribute to the Zn(2+) site.

It belongs to the peptidase M20A family. ArgE subfamily. Homodimer. The cofactor is Zn(2+). Co(2+) is required as a cofactor. Requires glutathione as cofactor.

It localises to the cytoplasm. It catalyses the reaction N(2)-acetyl-L-ornithine + H2O = L-ornithine + acetate. Its pathway is amino-acid biosynthesis; L-arginine biosynthesis; L-ornithine from N(2)-acetyl-L-ornithine (linear): step 1/1. Its function is as follows. Catalyzes the hydrolysis of the amide bond of N(2)-acetylated L-amino acids. Cleaves the acetyl group from N-acetyl-L-ornithine to form L-ornithine, an intermediate in L-arginine biosynthesis pathway, and a branchpoint in the synthesis of polyamines. This is Acetylornithine deacetylase from Escherichia coli (strain SMS-3-5 / SECEC).